Here is a 337-residue protein sequence, read N- to C-terminus: Diacylglycerol O-acyltransferase 2-like protein 6 (337 aa).

Helical transmembrane passes span 22-42 and 102-122; these read IPVY…LLLF and YIIL…NFAT.

The protein belongs to the diacylglycerol acyltransferase family.

It localises to the endoplasmic reticulum membrane. The catalysed reaction is 1,2-di-(9Z-octadecenoyl)-sn-glycerol + (9Z)-octadecenoyl-CoA = 1,2,3-tri-(9Z-octadecenoyl)-glycerol + CoA. Its function is as follows. Diglyceride acyltransferase that uses fatty acyl-CoA as substrate. Particularly active with oleate as a substrate. Has no wax synthase activity to produce wax esters. This chain is Diacylglycerol O-acyltransferase 2-like protein 6 (Dgat2l6), found in Mus musculus (Mouse).